Consider the following 489-residue polypeptide: MSVYGLQRLYIGGGYVDATSGKTFDTFDPATGDLLAQVQQASAADVDRAIASAQEGQREWAAMTAMQRSRILRRAVELLRERNDELAALETRDTGKPIAETLAVDIVTGADVIEYYAGLATAIEGLQVPLRADSFVYTRREPLGVCAGIGAWNYPIQIACWKTAPALAAGNAMVFKPSEVTPLSALKLAEIYTEAGVPAGVFNVVQGDGSVGALLTGHPDIAKVSFTGGVETGKKVMSLAGASSLKEVTMELGGKSPLIVFDDADLDRAADIAVTANFFSSGQVCTNGTRVFVHRSIKDAFTQKVLERVKRIRVGKPTDADTNFGPLVSAAQLDKVLGFIESGKAEGAKLLAGGTRLTEGHFANGQYVAPTVFGDCRDDMKIVREEIFGPVMSILEFESEDEVIARANDTHYGLAAGVVTENLSRAHRTIHRLEAGICWINTWGESPAEMPVGGYKQSGVGRENGITTLEHYTRIKSVQVELGRYNPVF.

K(+) contacts are provided by T26 and D93. 150–152 (GAW) provides a ligand contact to NAD(+). Residue K162 is the Charge relay system of the active site. Position 176–179 (176–179 (KPSE)) interacts with NAD(+). Residue V180 participates in K(+) binding. Position 229–232 (229–232 (GVET)) interacts with NAD(+). K(+) is bound at residue L245. E251 serves as the catalytic Proton acceptor. The NAD(+) site is built by G253, C285, and E386. Residue C285 is the Nucleophile of the active site. Residue C285 is modified to Cysteine sulfenic acid (-SOH). K(+)-binding residues include K456 and G459. Catalysis depends on E463, which acts as the Charge relay system.

It belongs to the aldehyde dehydrogenase family. In terms of assembly, dimer of dimers. K(+) is required as a cofactor.

It catalyses the reaction betaine aldehyde + NAD(+) + H2O = glycine betaine + NADH + 2 H(+). It functions in the pathway amine and polyamine biosynthesis; betaine biosynthesis via choline pathway; betaine from betaine aldehyde: step 1/1. In terms of biological role, involved in the biosynthesis of the osmoprotectant glycine betaine. Catalyzes the irreversible oxidation of betaine aldehyde to the corresponding acid. The protein is Betaine aldehyde dehydrogenase of Burkholderia multivorans (strain ATCC 17616 / 249).